A 123-amino-acid polypeptide reads, in one-letter code: Large ribosomal subunit protein bL12 (123 aa).

The disordered stretch occupies residues N96–K123. Over residues G100–E114 the composition is skewed to basic and acidic residues.

Belongs to the bacterial ribosomal protein bL12 family. In terms of assembly, homodimer. Part of the ribosomal stalk of the 50S ribosomal subunit. Forms a multimeric L10(L12)X complex, where L10 forms an elongated spine to which 2 to 4 L12 dimers bind in a sequential fashion. Binds GTP-bound translation factors.

Functionally, forms part of the ribosomal stalk which helps the ribosome interact with GTP-bound translation factors. Is thus essential for accurate translation. This is Large ribosomal subunit protein bL12 from Flavobacterium johnsoniae (strain ATCC 17061 / DSM 2064 / JCM 8514 / BCRC 14874 / CCUG 350202 / NBRC 14942 / NCIMB 11054 / UW101) (Cytophaga johnsonae).